The sequence spans 421 residues: Testin (421 aa).

The PET domain occupies 92–199 (MILTNPVPAK…GDVKLPSEMD (108 aa)). The interval 135–165 (QPVAGSEGAQYRKKQLAKQLPEHDQDPSKCH) is disordered. Basic and acidic residues predominate over residues 154 to 165 (LPEHDQDPSKCH). 3 LIM zinc-binding domains span residues 234–297 (YSCY…CDSE), 299–359 (PRCA…NHAV), and 362–421 (QGCH…KMMS).

This sequence belongs to the prickle / espinas / testin family. As to quaternary structure, interacts via LIM domain 1 with ZYX. Interacts (via LIM domain 3) with ENAH and VASP. Interacts with ALKBH4, talin, actin, alpha-actinin, GRIP1 and PXN. Interacts (via LIM domain 2) with ACTL7A (via N-terminus). Heterodimer with ACTL7A; the heterodimer interacts with ENAH to form a heterotrimer.

It is found in the cytoplasm. The protein resides in the cell junction. Its subcellular location is the focal adhesion. Functionally, scaffold protein that may play a role in cell adhesion, cell spreading and in the reorganization of the actin cytoskeleton. Plays a role in the regulation of cell proliferation. May act as a tumor suppressor. This chain is Testin (TES), found in Dasypus novemcinctus (Nine-banded armadillo).